Consider the following 1143-residue polypeptide: cGMP-specific 3',5'-cyclic phosphodiesterase (1143 aa).

Composition is skewed to low complexity over residues Met-1–Ser-19 and Thr-31–Ser-45. Positions Met-1–Asp-167 are disordered. The segment covering Lys-46–Thr-59 has biased composition (polar residues). The segment covering Gly-75 to Gly-84 has biased composition (low complexity). Over residues Ser-96 to Ser-107 the composition is skewed to polar residues. Residues Ser-131–Gln-153 are compositionally biased toward low complexity. 2 consecutive GAF domains span residues Asp-272–Ile-424 and Asn-456–Ile-637. In terms of domain architecture, PDEase spans Ser-667–Val-990. His-743 functions as the Proton donor in the catalytic mechanism. Positions 747, 783, 784, and 894 each coordinate a divalent metal cation. 2 disordered regions span residues Gln-1031–Leu-1060 and Ser-1090–Leu-1143. Basic and acidic residues-rich tracts occupy residues Gly-1036–Arg-1047 and Ser-1090–Ser-1100. Residues Ala-1109–Gly-1127 are compositionally biased toward low complexity. The segment covering Ser-1133–Leu-1143 has biased composition (basic residues). Cysteine methyl ester is present on Cys-1140. The S-farnesyl cysteine moiety is linked to residue Cys-1140. Positions Ala-1141–Leu-1143 are cleaved as a propeptide — removed in mature form.

The protein belongs to the cyclic nucleotide phosphodiesterase family. As to quaternary structure, interacts with PrBP. A divalent metal cation serves as cofactor.

Its subcellular location is the cell membrane. It catalyses the reaction 3',5'-cyclic GMP + H2O = GMP + H(+). Has a role regulating cGMP transport in Malpighian tubule principal cells. The chain is cGMP-specific 3',5'-cyclic phosphodiesterase from Drosophila simulans (Fruit fly).